Here is a 425-residue protein sequence, read N- to C-terminus: CBS domain-containing protein CBSX6 (425 aa).

A CBS 1 domain is found at Gly16–Glu90. The span at Ser159–Ser172 shows a compositional bias: low complexity. The interval Ser159 to Ser182 is disordered. Polar residues predominate over residues Thr173–Ser182. 2 helical membrane-spanning segments follow: residues Ile200–Ile220 and Tyr275–Glu295. The CBS 2 domain occupies Met347 to Phe409.

Its subcellular location is the vacuole membrane. This Arabidopsis thaliana (Mouse-ear cress) protein is CBS domain-containing protein CBSX6 (CBSX6).